Reading from the N-terminus, the 263-residue chain is Hydroxyethylthiazole kinase 1 (263 aa).

Substrate is bound at residue methionine 42. ATP contacts are provided by lysine 118 and threonine 164. A substrate-binding site is contributed by glycine 191.

Belongs to the Thz kinase family. Mg(2+) serves as cofactor.

The enzyme catalyses 5-(2-hydroxyethyl)-4-methylthiazole + ATP = 4-methyl-5-(2-phosphooxyethyl)-thiazole + ADP + H(+). It functions in the pathway cofactor biosynthesis; thiamine diphosphate biosynthesis; 4-methyl-5-(2-phosphoethyl)-thiazole from 5-(2-hydroxyethyl)-4-methylthiazole: step 1/1. In terms of biological role, catalyzes the phosphorylation of the hydroxyl group of 4-methyl-5-beta-hydroxyethylthiazole (THZ). This Clostridium botulinum (strain Okra / Type B1) protein is Hydroxyethylthiazole kinase 1.